The primary structure comprises 421 residues: Serine hydroxymethyltransferase (421 aa).

Residues leucine 121 and 125 to 127 each bind (6S)-5,6,7,8-tetrahydrofolate; that span reads GHL. The residue at position 230 (lysine 230) is an N6-(pyridoxal phosphate)lysine.

Belongs to the SHMT family. In terms of assembly, homodimer. It depends on pyridoxal 5'-phosphate as a cofactor.

It localises to the cytoplasm. It catalyses the reaction (6R)-5,10-methylene-5,6,7,8-tetrahydrofolate + glycine + H2O = (6S)-5,6,7,8-tetrahydrofolate + L-serine. It participates in one-carbon metabolism; tetrahydrofolate interconversion. Its pathway is amino-acid biosynthesis; glycine biosynthesis; glycine from L-serine: step 1/1. Catalyzes the reversible interconversion of serine and glycine with tetrahydrofolate (THF) serving as the one-carbon carrier. This reaction serves as the major source of one-carbon groups required for the biosynthesis of purines, thymidylate, methionine, and other important biomolecules. Also exhibits THF-independent aldolase activity toward beta-hydroxyamino acids, producing glycine and aldehydes, via a retro-aldol mechanism. The protein is Serine hydroxymethyltransferase of Carboxydothermus hydrogenoformans (strain ATCC BAA-161 / DSM 6008 / Z-2901).